We begin with the raw amino-acid sequence, 69 residues long: Conotoxin Lp3.1 (69 aa).

A signal peptide spans 1–20; sequence MLKMGVLLFIFLVLFPLTTL. A propeptide spanning residues 21–54 is cleaved from the precursor; that stretch reads ELDTDRPVERHAAIKQDLKPQERRGIRLHAPRDE. Intrachain disulfides connect Cys-55-Cys-67, Cys-56-Cys-65, and Cys-61-Cys-68.

Belongs to the conotoxin M superfamily. Expressed by the venom duct.

The protein localises to the secreted. The chain is Conotoxin Lp3.1 from Conus leopardus (Leopard cone).